The primary structure comprises 495 residues: Regulator of G-protein signaling 7 (495 aa).

In terms of domain architecture, DEP spans 37–112 (EKNGIPIRTV…DDGTFYRFQT (76 aa)). Ser-229 and Ser-241 each carry phosphoserine. The tract at residues 235–256 (NDIRSHSPTHTPTPETKPPTED) is disordered. Thr-243 is subject to Phosphothreonine. Residues 255-316 (EDELQQQIKY…LSDDTTFWEL (62 aa)) form the G protein gamma domain. The RGS domain occupies 333–448 (GMDEALKDPV…IRSSAYQELL (116 aa)). Ser-434 is subject to Phosphoserine.

In terms of assembly, interacts with GNB5, forming the RGS7-GNB5 complex. Interacts with GPR158; promotes the GTPase activator activity of the RGS7-GNB5 complex in absence of glycine, in contrast GTPase activator activity of the RGS7-GNB5 complex is inhibited in presence of glycine. Interacts with GPR179. Interacts with PKD1; this prevents rapid proteasomal degradation. Interacts with RGS7BP, leading to regulate the subcellular location of the heterodimer formed with GNB5. Interacts (phosphorylated form) with 14-3-3 protein YWHAQ. Interacts with SNAPIN. Interacts with GNAI1. Interacts with GNAO1, GNAI3 and GNAZ. Post-translationally, palmitoylated. In terms of processing, ubiquitinated, leading to rapid proteasomal degradation. Phosphorylation and subsequent interaction with 14-3-3 proteins inhibits GAP activity.

The protein resides in the cytoplasm. The protein localises to the cytosol. It localises to the cell membrane. Its subcellular location is the membrane. Functionally, GTPase activator component of the RGS7-GNB5 complex that regulates G protein-coupled receptor signaling cascades. The RGS7-GNB5 complex acts as an inhibitor signal transduction by promoting the GTPase activity of G protein alpha subunits, such as GNAO1, thereby driving them into their inactive GDP-bound form. May play a role in synaptic vesicle exocytosis. Glycine-dependent regulation of the RGS7-GNB5 complex by GPR158 affects mood and cognition via its ability to regulate neuronal excitability in L2/L3 pyramidal neurons of the prefrontal cortex. Modulates the activity of potassium channels that are activated by GNAO1 in response to muscarinic acetylcholine receptor M2/CHRM2 signaling. The sequence is that of Regulator of G-protein signaling 7 (RGS7) from Homo sapiens (Human).